Here is a 174-residue protein sequence, read N- to C-terminus: uncharacterized protein (174 aa).

In terms of domain architecture, N-acetyltransferase spans 42-174 (SNTKNINLYE…GVKGMFWYPR (133 aa)).

Belongs to the acetyltransferase family. Ycf52 subfamily.

Its subcellular location is the plastid. The protein localises to the chloroplast. This is an uncharacterized protein from Porphyra purpurea (Red seaweed).